A 41-amino-acid polypeptide reads, in one-letter code: Large ribosomal subunit protein bL36B (41 aa).

Belongs to the bacterial ribosomal protein bL36 family.

The protein is Large ribosomal subunit protein bL36B of Neisseria meningitidis serogroup B (strain ATCC BAA-335 / MC58).